Reading from the N-terminus, the 736-residue chain is Zinc finger CCCH domain-containing protein 14 (736 aa).

Residue M1 is modified to N-acetylmethionine. Composition is skewed to polar residues over residues 77 to 103 and 131 to 145; these read TTEP…SNFS and VSTS…NVRQ. Residues 77–145 form a disordered region; it reads TTEPSSLKSS…QESKTTNVRQ (69 aa). A Phosphoserine modification is found at S85. Residues K99, K139, K175, and K198 each participate in a glycyl lysine isopeptide (Lys-Gly) (interchain with G-Cter in SUMO2) cross-link. S240 bears the Phosphoserine mark. Residue K245 forms a Glycyl lysine isopeptide (Lys-Gly) (interchain with G-Cter in SUMO2) linkage. The residue at position 281 (S281) is a Phosphoserine. Glycyl lysine isopeptide (Lys-Gly) (interchain with G-Cter in SUMO2) cross-links involve residues K283 and K295. Residues 310–350 are disordered; it reads HDGEEEEEDDDYGSRTGSISSSVSVPAKPERRPSLPPSKQA. S327 and S343 each carry phosphoserine. Position 357 is an N6-acetyllysine; alternate (K357). K357 is covalently cross-linked (Glycyl lysine isopeptide (Lys-Gly) (interchain with G-Cter in SUMO2); alternate). Residue K378 forms a Glycyl lysine isopeptide (Lys-Gly) (interchain with G-Cter in SUMO2) linkage. Phosphoserine occurs at positions 390 and 409. Residues 398-430 are disordered; sequence VVQGQSRTPRISPPIKEEETKGDSVEKNQGTQQ. The span at 412–423 shows a compositional bias: basic and acidic residues; sequence IKEEETKGDSVE. K413 participates in a covalent cross-link: Glycyl lysine isopeptide (Lys-Gly) (interchain with G-Cter in SUMO2). Residue S421 is modified to Phosphoserine. K489 is covalently cross-linked (Glycyl lysine isopeptide (Lys-Gly) (interchain with G-Cter in SUMO2)). Phosphoserine occurs at positions 498, 515, 527, and 620. 5 consecutive C3H1-type zinc fingers follow at residues 595–620, 621–640, 641–656, 682–699, and 701–719; these read EKLL…HPIS, PCKA…VHPN, CKYD…PFTH, CRYF…YHPK, and CRFN…HPTI.

It belongs to the ZC3H14 family. As to quaternary structure, homodimer; facilitating circular RNAs (circRNAs) formation. Associates with the spliceosome. Interacts with HOOK2. Interacts with ZFC3H1 in a RNase-sensitive manner. As to expression, expressed in fetal and adult brain. Expressed in fetal and adult temporal lobe.

The protein localises to the nucleus speckle. The protein resides in the cytoplasm. Its function is as follows. RNA-binding protein involved in the biogenesis of circular RNAs (circRNAs), which are produced by back-splicing circularization of pre-mRNAs. Acts by binding to both exon-intron boundary and 3'-UTR of pre-mRNAs to promote circRNA biogenesis through dimerization and the association with the spliceosome. Required for spermatogenesis via involvement in circRNA biogenesis. Regulates the pre-mRNA processing of ATP5MC1; preventing its degradation. Also binds the poly(A) tail of mRNAs; controlling poly(A) length in neuronal cells. This chain is Zinc finger CCCH domain-containing protein 14, found in Homo sapiens (Human).